Reading from the N-terminus, the 187-residue chain is Elongation factor P (187 aa).

It belongs to the elongation factor P family.

The protein localises to the cytoplasm. Its pathway is protein biosynthesis; polypeptide chain elongation. Involved in peptide bond synthesis. Stimulates efficient translation and peptide-bond synthesis on native or reconstituted 70S ribosomes in vitro. Probably functions indirectly by altering the affinity of the ribosome for aminoacyl-tRNA, thus increasing their reactivity as acceptors for peptidyl transferase. This is Elongation factor P from Synechococcus sp. (strain CC9605).